The chain runs to 837 residues: DNA primase (837 aa).

Residues Cys-782–Cys-821 form a CHC2-type zinc finger.

It belongs to the herpesviridae DNA primase family. Associates with the helicase and the primase-associated factor to form the helicase-primase factor.

It localises to the host nucleus. In terms of biological role, essential component of the helicase/primase complex. Unwinds the DNA at the replication forks and generates single-stranded DNA for both leading and lagging strand synthesis. The primase initiates primer synthesis and thereby produces large amount of short RNA primers on the lagging strand that the polymerase elongates using dNTPs. This Connochaetes taurinus (Blue wildebeest) protein is DNA primase (56).